The sequence spans 467 residues: Squalene synthase (467 aa).

Belongs to the phytoene/squalene synthase family. Mg(2+) is required as a cofactor.

The catalysed reaction is 2 (2E,6E)-farnesyl diphosphate + NADPH + H(+) = squalene + 2 diphosphate + NADP(+). The enzyme catalyses 2 (2E,6E)-farnesyl diphosphate + NADH + H(+) = squalene + 2 diphosphate + NAD(+). It participates in terpene metabolism; lanosterol biosynthesis; lanosterol from farnesyl diphosphate: step 1/3. Its function is as follows. Squalene synthase; part of the third module of ergosterol biosynthesis pathway that includes the late steps of the pathway. The third module or late pathway involves the ergosterol synthesis itself through consecutive reactions that mainly occur in the endoplasmic reticulum (ER) membrane. Firstly, the squalene synthase SQS catalyzes the condensation of 2 farnesyl pyrophosphate moieties to form squalene, which is the precursor of all steroids. Secondly, the squalene epoxidase catalyzes the stereospecific oxidation of squalene to (S)-2,3-epoxysqualene, which is considered to be a rate-limiting enzyme in steroid biosynthesis. Then, the lanosterol synthase LS catalyzes the cyclization of (S)-2,3 oxidosqualene to lanosterol, a reaction that forms the sterol core. In the next steps, lanosterol is transformed to ergosterol via a complex process involving various demethylation, reduction and desaturation reactions. Lanosterol is also an intermediate in the biosynthesis of triterpenes such as ganoderic acids (GA), a group of highly oxygenated lanostane-type triterpenoids which are well recognized as a main group of unique bioactive compounds in the medicinal mushroom Ganoderma lucidum. The chain is Squalene synthase from Ganoderma lucidum (Ling zhi medicinal fungus).